A 626-amino-acid polypeptide reads, in one-letter code: uncharacterized protein (626 aa).

Residues 103-123 form a helical membrane-spanning segment; it reads AGALLVKFFPLLLLYPLTYLA. One can recognise a Protein kinase domain in the interval 200 to 618; that stretch reads FENREPVGSG…DILEAARPFL (419 aa). Residues 206-214 and K311 each bind ATP; that span reads VGSGCVAQV. The active-site Proton acceptor is D445.

Belongs to the protein kinase superfamily. ADCK protein kinase family.

Its subcellular location is the mitochondrion. The protein resides in the membrane. Functionally, the function of this protein is not yet clear. It is not known if it has protein kinase activity and what type of substrate it would phosphorylate (Ser, Thr or Tyr). Involved in the mitochondrial import of CoQ precursors, plays a role in muscle mitochondrial function and fatty acid beta-oxidation. This is an uncharacterized protein from Homo sapiens (Human).